A 179-amino-acid chain; its full sequence is Large ribosomal subunit protein uL5 (179 aa).

It belongs to the universal ribosomal protein uL5 family. As to quaternary structure, part of the 50S ribosomal subunit; part of the 5S rRNA/L5/L18/L25 subcomplex. Contacts the 5S rRNA and the P site tRNA. Forms a bridge to the 30S subunit in the 70S ribosome.

Its function is as follows. This is one of the proteins that bind and probably mediate the attachment of the 5S RNA into the large ribosomal subunit, where it forms part of the central protuberance. In the 70S ribosome it contacts protein S13 of the 30S subunit (bridge B1b), connecting the 2 subunits; this bridge is implicated in subunit movement. Contacts the P site tRNA; the 5S rRNA and some of its associated proteins might help stabilize positioning of ribosome-bound tRNAs. In Halorhodospira halophila (strain DSM 244 / SL1) (Ectothiorhodospira halophila (strain DSM 244 / SL1)), this protein is Large ribosomal subunit protein uL5.